Reading from the N-terminus, the 273-residue chain is 4-hydroxy-tetrahydrodipicolinate reductase (273 aa).

NAD(+)-binding positions include 12–17 and Glu38; that span reads GAGGRM. Residue Arg39 participates in NADP(+) binding. NAD(+) contacts are provided by residues 102 to 104 and 126 to 129; these read GTT and AANF. His159 (proton donor/acceptor) is an active-site residue. His160 contacts (S)-2,3,4,5-tetrahydrodipicolinate. The Proton donor role is filled by Lys163. 169 to 170 is a binding site for (S)-2,3,4,5-tetrahydrodipicolinate; sequence GT.

The protein belongs to the DapB family. As to quaternary structure, homotetramer.

Its subcellular location is the cytoplasm. The catalysed reaction is (S)-2,3,4,5-tetrahydrodipicolinate + NAD(+) + H2O = (2S,4S)-4-hydroxy-2,3,4,5-tetrahydrodipicolinate + NADH + H(+). The enzyme catalyses (S)-2,3,4,5-tetrahydrodipicolinate + NADP(+) + H2O = (2S,4S)-4-hydroxy-2,3,4,5-tetrahydrodipicolinate + NADPH + H(+). It participates in amino-acid biosynthesis; L-lysine biosynthesis via DAP pathway; (S)-tetrahydrodipicolinate from L-aspartate: step 4/4. Catalyzes the conversion of 4-hydroxy-tetrahydrodipicolinate (HTPA) to tetrahydrodipicolinate. This Escherichia coli O157:H7 protein is 4-hydroxy-tetrahydrodipicolinate reductase.